A 131-amino-acid polypeptide reads, in one-letter code: Methyl-coenzyme M reductase operon protein D (131 aa).

As to quaternary structure, MCR is composed of three subunits: alpha, beta, and gamma. The function of proteins C and D is not known.

The polypeptide is Methyl-coenzyme M reductase operon protein D (mcrD) (Methanothermus fervidus).